We begin with the raw amino-acid sequence, 297 residues long: Transmembrane protein 169 (297 aa).

The interval M1–I84 is disordered. Topologically, residues M1 to H159 are extracellular. A compositionally biased stretch (polar residues) spans G9–H18. Over residues E60–I84 the composition is skewed to acidic residues. A helical membrane pass occupies residues V160–F180. Over Y181–L210 the chain is Cytoplasmic. Residues I211–V231 form a helical membrane-spanning segment. At V232–V297 the chain is on the extracellular side.

The protein localises to the membrane. This chain is Transmembrane protein 169 (TMEM169), found in Bos taurus (Bovine).